We begin with the raw amino-acid sequence, 101 residues long: Putative regulatory protein Csac_2087 (101 aa).

Belongs to the RemA family.

The chain is Putative regulatory protein Csac_2087 from Caldicellulosiruptor saccharolyticus (strain ATCC 43494 / DSM 8903 / Tp8T 6331).